We begin with the raw amino-acid sequence, 142 residues long: Large ribosomal subunit protein uL13 (142 aa).

The protein belongs to the universal ribosomal protein uL13 family. As to quaternary structure, part of the 50S ribosomal subunit.

This protein is one of the early assembly proteins of the 50S ribosomal subunit, although it is not seen to bind rRNA by itself. It is important during the early stages of 50S assembly. The chain is Large ribosomal subunit protein uL13 from Polynucleobacter asymbioticus (strain DSM 18221 / CIP 109841 / QLW-P1DMWA-1) (Polynucleobacter necessarius subsp. asymbioticus).